The sequence spans 360 residues: MTTLLEQRSSANLWHRFGNWITSTENRMYVGWFGVLLIPTALTAAIVFILAFIAAPPVDVDGIREPVSGSLLYGNNIITATVVPTSAAIGLHLYPIWEAASLDEWLYNGGPYQMIVLHFLIAIYAYMGRQWELSYRLGMRPWIPVAFSAPVAAATAVLLIYPIGQGSFSDGMMLGISGTFNFMIVFSPEHNILMHPFHMIGVAGVFGGALFSAMHGSLVTSTLVRETSEVESANTGYKFGQEEETYNIVAAHGYFGRLIFQYASFNNSRSLHFFLAAWPVIGIWFAALGISTMSFNLNGFNFNNSILDHQGRTIDTWADLLNRANLGIEVMHERNAHNFPLDLASGEVQPIALAAPAIAS.

Helical transmembrane passes span 29–46 (YVGWFGVLLIPTALTAAI), 118–133 (HFLIAIYAYMGRQWEL), and 142–156 (WIPVAFSAPVAAATA). H118 provides a ligand contact to chlorophyll a. Position 126 (Y126) interacts with pheophytin a. Residues D170 and E189 each coordinate [CaMn4O5] cluster. Residues 197-218 (FHMIGVAGVFGGALFSAMHGSL) form a helical membrane-spanning segment. Chlorophyll a is bound at residue H198. A quinone-binding positions include H215 and 264 to 265 (SF). H215 contacts Fe cation. Position 272 (H272) interacts with Fe cation. Residues 274 to 288 (FLAAWPVIGIWFAAL) form a helical membrane-spanning segment. Residues H332, E333, D342, and A344 each coordinate [CaMn4O5] cluster. Positions 345-360 (SGEVQPIALAAPAIAS) are excised as a propeptide.

This sequence belongs to the reaction center PufL/M/PsbA/D family. In terms of assembly, PSII is composed of 1 copy each of membrane proteins PsbA, PsbB, PsbC, PsbD, PsbE, PsbF, PsbH, PsbI, PsbJ, PsbK, PsbL, PsbM, PsbT, PsbX, PsbY, PsbZ, Psb30/Ycf12, peripheral proteins PsbO, CyanoQ (PsbQ), PsbU, PsbV and a large number of cofactors. It forms dimeric complexes. The D1/D2 heterodimer binds P680, chlorophylls that are the primary electron donor of PSII, and subsequent electron acceptors. It shares a non-heme iron and each subunit binds pheophytin, quinone, additional chlorophylls, carotenoids and lipids. D1 provides most of the ligands for the Mn4-Ca-O5 cluster of the oxygen-evolving complex (OEC). There is also a Cl(-1) ion associated with D1 and D2, which is required for oxygen evolution. The PSII complex binds additional chlorophylls, carotenoids and specific lipids. serves as cofactor. Tyr-161 forms a radical intermediate that is referred to as redox-active TyrZ, YZ or Y-Z. Post-translationally, C-terminally processed by CtpA; processing is essential to allow assembly of the oxygen-evolving complex and thus photosynthetic growth.

Its subcellular location is the cellular thylakoid membrane. The enzyme catalyses 2 a plastoquinone + 4 hnu + 2 H2O = 2 a plastoquinol + O2. Functionally, photosystem II (PSII) is a light-driven water:plastoquinone oxidoreductase that uses light energy to abstract electrons from H(2)O, generating O(2) and a proton gradient subsequently used for ATP formation. It consists of a core antenna complex that captures photons, and an electron transfer chain that converts photonic excitation into a charge separation. The D1/D2 (PsbA/PsbD) reaction center heterodimer binds P680, the primary electron donor of PSII as well as several subsequent electron acceptors. This chain is Photosystem II protein D1 1, found in Trichormus variabilis (strain ATCC 29413 / PCC 7937) (Anabaena variabilis).